A 620-amino-acid chain; its full sequence is MKQSKMLIPTLREMPSDAQVISHALMVRAGYVRQVSAGIYAYMPLANRAIEKFKTIMREEFEKIGAVEMLAPALLTADLWRESGRYETYGEDLYKLKNRDNSDFILGPTHEETFTVLVRDAVKSYKQLPLNLYQIQSKYRDEKRPRNGLLRTREFIMKDAYSFHQNYEDLDVTYEDYRKAYEAIFTRAGLEFKAIIGDGGAMGGKDSQEFMAVTPERTDLNRWVVLDKSIASLDEIPEDVMEEIKNELTSWLVAGEDTIAYSTESSYAANLEMATNAYTPATKVVTQEEVSRVETPGCKSIDDVAAFLNIPEEQTIKTLLFTADDEPVVALLVGNDQVNDVKLKNYLAADFLKPATEDEARQVFGANFGSLGPVNLPENVRIIADRKVQDVANAVVGANEDGYHLTGVNPERDFKAEYVDIRKVKEGEISPDGQGVLQFARGIEIGHIFKLGTRYSESMGANVLDENGRAVPIIMGCYGIGVSRILSAVIEQHARLFVNKTPKGQYRYAWGINFPKELAPYDVHLITVNTKDEEANALTDRLEAALAAEGYDVLIDDRNERVGSKFSDSDLIGLPIRVTVGKKASEGVVEVKIKATGDTIEVNADNLIETLAILTTEQDA.

The protein belongs to the class-II aminoacyl-tRNA synthetase family. ProS type 1 subfamily. As to quaternary structure, homodimer.

Its subcellular location is the cytoplasm. It carries out the reaction tRNA(Pro) + L-proline + ATP = L-prolyl-tRNA(Pro) + AMP + diphosphate. Its function is as follows. Catalyzes the attachment of proline to tRNA(Pro) in a two-step reaction: proline is first activated by ATP to form Pro-AMP and then transferred to the acceptor end of tRNA(Pro). As ProRS can inadvertently accommodate and process non-cognate amino acids such as alanine and cysteine, to avoid such errors it has two additional distinct editing activities against alanine. One activity is designated as 'pretransfer' editing and involves the tRNA(Pro)-independent hydrolysis of activated Ala-AMP. The other activity is designated 'posttransfer' editing and involves deacylation of mischarged Ala-tRNA(Pro). The misacylated Cys-tRNA(Pro) is not edited by ProRS. The sequence is that of Proline--tRNA ligase from Streptococcus thermophilus (strain ATCC BAA-491 / LMD-9).